The sequence spans 492 residues: Ribulose bisphosphate carboxylase large chain (492 aa).

2 residues coordinate substrate: Asn131 and Thr181. The active-site Proton acceptor is the Lys183. Lys185 lines the substrate pocket. Residues Lys209, Asp211, and Glu212 each coordinate Mg(2+). The residue at position 209 (Lys209) is an N6-carboxylysine. The active-site Proton acceptor is the His301. Substrate is bound by residues Arg302, His334, and Ser386.

The protein belongs to the RuBisCO large chain family. Type I subfamily. As to quaternary structure, heterohexadecamer of 8 large chains and 8 small chains. The cofactor is Mg(2+).

The catalysed reaction is 2 (2R)-3-phosphoglycerate + 2 H(+) = D-ribulose 1,5-bisphosphate + CO2 + H2O. It catalyses the reaction D-ribulose 1,5-bisphosphate + O2 = 2-phosphoglycolate + (2R)-3-phosphoglycerate + 2 H(+). RuBisCO catalyzes two reactions: the carboxylation of D-ribulose 1,5-bisphosphate, the primary event in carbon dioxide fixation, as well as the oxidative fragmentation of the pentose substrate. Both reactions occur simultaneously and in competition at the same active site. This chain is Ribulose bisphosphate carboxylase large chain, found in Nitrosococcus oceani (strain ATCC 19707 / BCRC 17464 / JCM 30415 / NCIMB 11848 / C-107).